A 253-amino-acid polypeptide reads, in one-letter code: Vitamin B12 import ATP-binding protein BtuD (253 aa).

Positions 4–236 (LQLSNVSVDT…NILSEVFEVD (233 aa)) constitute an ABC transporter domain. Residue 32–39 (GPNGAGKS) coordinates ATP.

Belongs to the ABC transporter superfamily. Vitamin B12 importer (TC 3.A.1.13.1) family. The complex is composed of two ATP-binding proteins (BtuD), two transmembrane proteins (BtuC) and a solute-binding protein (BtuF).

It is found in the cell inner membrane. It carries out the reaction an R-cob(III)alamin(out) + ATP + H2O = an R-cob(III)alamin(in) + ADP + phosphate + H(+). Part of the ABC transporter complex BtuCDF involved in vitamin B12 import. Responsible for energy coupling to the transport system. In Yersinia enterocolitica serotype O:8 / biotype 1B (strain NCTC 13174 / 8081), this protein is Vitamin B12 import ATP-binding protein BtuD.